We begin with the raw amino-acid sequence, 186 residues long: High mobility group protein B4 (186 aa).

2 consecutive DNA-binding regions (HMG box) follow at residues 9–79 and 93–161; these read PKAN…MNYV and PRRP…ELYR. Residues 77-98 are disordered; that stretch reads NYVGKRKKRRKRDPQEPRRPPS.

It belongs to the HMGB family.

The protein localises to the nucleus. It is found in the chromosome. The protein is High mobility group protein B4 (HMGB4) of Homo sapiens (Human).